The primary structure comprises 353 residues: MHLRHLFSLRLRGSLLLGSLLVASSFSTQAAEEMLRKAVGKGAYEMAYSQQENALWLATSQSRKLDKGGVVYRLDPVTLEVTQAIHNDLKPFGATINNTTQTLWFGNTVNSAVTAIDAKTGEVKGRLVLDDRKRTEEVRPLQPRELVADDATNTVYISGIGKDSVIWVVDGENIKLKTAIQNTGKMSTGLALDSKGKRLYTTNADGELITIDTADNKILSRKKLLDDGKEHFFINISLDTARQRAFITDSKAAEVLVVDTRNGNILAKVAAPESLAVLFNPARNEAYVTHRQAGKVSVIDAKSYKVVKTFDTPTHPNSLALSADGKTLYVSVKQKSTKQQEATQPDDVIRIAL.

The N-terminal stretch at 1–30 (MHLRHLFSLRLRGSLLLGSLLVASSFSTQA) is a signal peptide.

This is an uncharacterized protein from Escherichia coli O157:H7.